We begin with the raw amino-acid sequence, 385 residues long: S-adenosylmethionine synthase (385 aa).

Residue histidine 15 coordinates ATP. Aspartate 17 is a Mg(2+) binding site. Glutamate 43 provides a ligand contact to K(+). Positions 56 and 99 each coordinate L-methionine. The segment at 99-109 (QSPDINQGVDR) is flexible loop. ATP is bound by residues 164-166 (DAK), 230-231 (RF), aspartate 239, 245-246 (RK), alanine 262, and lysine 266. Aspartate 239 is an L-methionine binding site. Lysine 270 contributes to the L-methionine binding site.

The protein belongs to the AdoMet synthase family. Homotetramer; dimer of dimers. Mg(2+) serves as cofactor. The cofactor is K(+).

It localises to the cytoplasm. The enzyme catalyses L-methionine + ATP + H2O = S-adenosyl-L-methionine + phosphate + diphosphate. It functions in the pathway amino-acid biosynthesis; S-adenosyl-L-methionine biosynthesis; S-adenosyl-L-methionine from L-methionine: step 1/1. Functionally, catalyzes the formation of S-adenosylmethionine (AdoMet) from methionine and ATP. The overall synthetic reaction is composed of two sequential steps, AdoMet formation and the subsequent tripolyphosphate hydrolysis which occurs prior to release of AdoMet from the enzyme. This chain is S-adenosylmethionine synthase, found in Sodalis glossinidius (strain morsitans).